Consider the following 330-residue polypeptide: tRNA(Ile)-lysidine synthase (330 aa).

31–36 (SGGQDS) provides a ligand contact to ATP.

This sequence belongs to the tRNA(Ile)-lysidine synthase family.

The protein localises to the cytoplasm. It catalyses the reaction cytidine(34) in tRNA(Ile2) + L-lysine + ATP = lysidine(34) in tRNA(Ile2) + AMP + diphosphate + H(+). In terms of biological role, ligates lysine onto the cytidine present at position 34 of the AUA codon-specific tRNA(Ile) that contains the anticodon CAU, in an ATP-dependent manner. Cytidine is converted to lysidine, thus changing the amino acid specificity of the tRNA from methionine to isoleucine. The protein is tRNA(Ile)-lysidine synthase of Synechocystis sp. (strain ATCC 27184 / PCC 6803 / Kazusa).